A 576-amino-acid polypeptide reads, in one-letter code: Formate--tetrahydrofolate ligase (576 aa).

Residue 64–71 coordinates ATP; it reads TPLGEGKT.

It belongs to the formate--tetrahydrofolate ligase family.

It carries out the reaction (6S)-5,6,7,8-tetrahydrofolate + formate + ATP = (6R)-10-formyltetrahydrofolate + ADP + phosphate. It participates in one-carbon metabolism; tetrahydrofolate interconversion. This chain is Formate--tetrahydrofolate ligase, found in Aeromonas hydrophila subsp. hydrophila (strain ATCC 7966 / DSM 30187 / BCRC 13018 / CCUG 14551 / JCM 1027 / KCTC 2358 / NCIMB 9240 / NCTC 8049).